Consider the following 298-residue polypeptide: uncharacterized protein (298 aa).

The HTH lysR-type domain occupies 1-61; it reads MDIFISKKMR…TRKDNNISLN (61 aa). A DNA-binding region (H-T-H motif) is located at residues 21 to 40; the sequence is IARAAEKIHMTASPFGKSIA.

This sequence belongs to the LysR transcriptional regulatory family.

This is an uncharacterized protein from Escherichia coli (strain K12).